The primary structure comprises 169 residues: Ribosome maturation factor RimM (169 aa).

In terms of domain architecture, PRC barrel spans aspartate 94–leucine 168.

It belongs to the RimM family. As to quaternary structure, binds ribosomal protein uS19.

The protein localises to the cytoplasm. Its function is as follows. An accessory protein needed during the final step in the assembly of 30S ribosomal subunit, possibly for assembly of the head region. Essential for efficient processing of 16S rRNA. May be needed both before and after RbfA during the maturation of 16S rRNA. It has affinity for free ribosomal 30S subunits but not for 70S ribosomes. This is Ribosome maturation factor RimM from Cereibacter sphaeroides (strain ATCC 17029 / ATH 2.4.9) (Rhodobacter sphaeroides).